The primary structure comprises 129 residues: Small ribosomal subunit protein uS9 (129 aa).

It belongs to the universal ribosomal protein uS9 family.

In Chlorobium phaeovibrioides (strain DSM 265 / 1930) (Prosthecochloris vibrioformis (strain DSM 265)), this protein is Small ribosomal subunit protein uS9.